Consider the following 319-residue polypeptide: Coproporphyrin III ferrochelatase 2 (319 aa).

Residues Tyr13, Arg30, 46-47, Ser54, and Tyr125 contribute to the Fe-coproporphyrin III site; that span reads RY. Fe(2+)-binding residues include His181 and Glu262.

It belongs to the ferrochelatase family.

The protein resides in the cytoplasm. The catalysed reaction is Fe-coproporphyrin III + 2 H(+) = coproporphyrin III + Fe(2+). It participates in porphyrin-containing compound metabolism; protoheme biosynthesis. Its function is as follows. Involved in coproporphyrin-dependent heme b biosynthesis. Catalyzes the insertion of ferrous iron into coproporphyrin III to form Fe-coproporphyrin III. The polypeptide is Coproporphyrin III ferrochelatase 2 (Bacillus cereus (strain ZK / E33L)).